The sequence spans 883 residues: Integrator complex subunit 6 (883 aa).

Residues 3–227 (ILLFLIDTSA…QCLESLVQKV (225 aa)) form the VWFA domain. Positions 625-632 (MMIDEADE) match the Inhibitory loop motif. The tract at residues 666–686 (RRQSPAVNSHIGGKGPPAPMT) is disordered. At Ser-800 the chain carries Phosphoserine.

It belongs to the Integrator subunit 6 family. Component of the Integrator complex, composed of core subunits INTS1, INTS2, INTS3, INTS4, INTS5, INTS6, INTS7, INTS8, INTS9/RC74, INTS10, INTS11/CPSF3L, INTS12, INTS13, INTS14 and INTS15. The core complex associates with protein phosphatase 2A subunits PPP2CA and PPP2R1A, to form the Integrator-PP2A (INTAC) complex.

Its subcellular location is the nucleus. The protein resides in the chromosome. Its function is as follows. Component of the integrator complex, a multiprotein complex that terminates RNA polymerase II (Pol II) transcription in the promoter-proximal region of genes. The integrator complex provides a quality checkpoint during transcription elongation by driving premature transcription termination of transcripts that are unfavorably configured for transcriptional elongation: the complex terminates transcription by (1) catalyzing dephosphorylation of the C-terminal domain (CTD) of Pol II subunit POLR2A/RPB1 and SUPT5H/SPT5, (2) degrading the exiting nascent RNA transcript via endonuclease activity and (3) promoting the release of Pol II from bound DNA. The integrator complex is also involved in terminating the synthesis of non-coding Pol II transcripts, such as enhancer RNAs (eRNAs), small nuclear RNAs (snRNAs), telomerase RNAs and long non-coding RNAs (lncRNAs). Within the integrator complex, INTS6 acts as a molecular adapter that promotes assembly of protein phosphatase 2A (PP2A) subunits to the integrator core complex, promoting recruitment of PP2A to transcription pause-release checkpoint. Mediates recruitment of cytoplasmic dynein to the nuclear envelope, probably as component of the integrator complex. This is Integrator complex subunit 6 (Ints6) from Mus musculus (Mouse).